Reading from the N-terminus, the 112-residue chain is UPF0145 protein MmarC6_1828 (112 aa).

It belongs to the UPF0145 family.

The chain is UPF0145 protein MmarC6_1828 from Methanococcus maripaludis (strain C6 / ATCC BAA-1332).